The sequence spans 212 residues: Peroxiredoxin 2 (212 aa).

Residues 7–162 (PLIGEKFPEM…ILRSIRALQL (156 aa)) form the Thioredoxin domain. Residue cysteine 49 is the Cysteine sulfenic acid (-SOH) intermediate of the active site. Arginine 125 contributes to the substrate binding site.

It belongs to the peroxiredoxin family. Prx6 subfamily. In terms of assembly, homodecamer. Pentamer of dimers that assemble into a ring structure.

Its subcellular location is the cytoplasm. It carries out the reaction a hydroperoxide + [thioredoxin]-dithiol = an alcohol + [thioredoxin]-disulfide + H2O. Its function is as follows. Thiol-specific peroxidase that catalyzes the reduction of hydrogen peroxide and organic hydroperoxides to water and alcohols, respectively. Plays a role in cell protection against oxidative stress by detoxifying peroxides. The chain is Peroxiredoxin 2 from Sulfurisphaera tokodaii (strain DSM 16993 / JCM 10545 / NBRC 100140 / 7) (Sulfolobus tokodaii).